The following is a 469-amino-acid chain: Adenosylhomocysteinase (469 aa).

Positions 60, 135, and 195 each coordinate substrate. Position 196–198 (196–198 (TTT)) interacts with NAD(+). 2 residues coordinate substrate: Lys-225 and Asp-229. NAD(+) contacts are provided by residues Asn-230, 259 to 264 (GYGDVG), Glu-282, Asn-317, 338 to 340 (IGH), and Asn-383.

Belongs to the adenosylhomocysteinase family. NAD(+) serves as cofactor.

It localises to the cytoplasm. It catalyses the reaction S-adenosyl-L-homocysteine + H2O = L-homocysteine + adenosine. It participates in amino-acid biosynthesis; L-homocysteine biosynthesis; L-homocysteine from S-adenosyl-L-homocysteine: step 1/1. In terms of biological role, may play a key role in the regulation of the intracellular concentration of adenosylhomocysteine. This is Adenosylhomocysteinase from Maricaulis maris (strain MCS10) (Caulobacter maris).